Here is a 445-residue protein sequence, read N- to C-terminus: Reticulon-4 receptor-like 1 (445 aa).

An N-terminal signal peptide occupies residues 1 to 24 (MLRKGCCVELLLLLLAGELPLGGG). The LRRNT domain occupies 25–54 (CPRDCVCYPAPMTVSCQAHNFAAIPEGIPE). LRR repeat units follow at residues 55 to 76 (DSERIFLQNNRITFLQQGHFSP), 77 to 98 (AMVTLWIYSNNITFIAPNTFEG), 101 to 123 (HLEELDLGDNRQLRTLAPETFQG), 126 to 147 (KLHALYLYKCGLSALPAGIFGG), 150 to 171 (SLQYLYLQDNHIEYLQDDIFVD), 174 to 195 (NLSHLFLHGNKLWSLGQGIFRG), 198 to 219 (NLDRLLLHENQLQWVHHKAFHD), and 222 to 243 (RLTTLFLFNNSLTELQGDCLAP). One can recognise an LRRCT domain in the interval 255–306 (NAWDCGCRARSLWEWLRRFRGSSSAVPCATPELRQGQDLKLLRVEDFRNCTG). Disordered stretches follow at residues 307–377 (PVSP…SGKE) and 401–424 (RPKRKGKCARRTPIRAPSGVQQAS). Basic residues-rich tracts occupy residues 352–366 (GYKKAGKNCTSHRNR) and 401–413 (RPKRKGKCARRTP). Ser-424 is lipidated: GPI-anchor amidated serine. A helical membrane pass occupies residues 424–444 (SSGTALGAPLLAWILGLAVTL). Positions 425–445 (SGTALGAPLLAWILGLAVTLR) are cleaved as a propeptide — removed in mature form.

Belongs to the Nogo receptor family. In terms of assembly, identified in a complex that contains RTN4R, RTN4RL1 and NGFR; the interaction depends on the presence of chondroitin sulfate proteoglycans. Does not interact with MAG, OMG and RTN4. As to expression, detected in brain (at protein level). Detected in retina ganglion cell layer and inner nuclear layer.

Its subcellular location is the cell membrane. The protein localises to the membrane raft. It localises to the perikaryon. The protein resides in the cell projection. Functionally, cell surface receptor that plays a functionally redundant role in postnatal brain development and in regulating axon regeneration in the adult central nervous system. Contributes to normal axon migration across the brain midline and normal formation of the corpus callosum. Protects motoneurons against apoptosis; protection against apoptosis is probably mediated by MAG. Plays a role in inhibiting neurite outgrowth and axon regeneration via its binding to neuronal chondroitin sulfate proteoglycans. Binds heparin. Like other family members, plays a role in restricting the number dendritic spines and the number of synapses that are formed during brain development. Signaling mediates activation of Rho and downstream reorganization of the actin cytoskeleton. This is Reticulon-4 receptor-like 1 from Mus musculus (Mouse).